An 819-amino-acid chain; its full sequence is LPS-assembly protein LptD (819 aa).

An N-terminal signal peptide occupies residues 1-33; the sequence is MRQMKYQFKFNPLAAAIFTLLCGGSMQSSYADA.

Belongs to the LptD family. Component of the lipopolysaccharide transport and assembly complex. Interacts with LptE and LptA.

It is found in the cell outer membrane. In terms of biological role, together with LptE, is involved in the assembly of lipopolysaccharide (LPS) at the surface of the outer membrane. The protein is LPS-assembly protein LptD of Acinetobacter baylyi (strain ATCC 33305 / BD413 / ADP1).